A 249-amino-acid polypeptide reads, in one-letter code: tRNA (guanine-N(7)-)-methyltransferase (249 aa).

The interval 1-24 is disordered; sequence MHSIPADTGHTPSRAPAGNGSPPA. S-adenosyl-L-methionine is bound by residues glutamate 81, glutamate 106, aspartate 133, and aspartate 156. The active site involves aspartate 156. Lysine 160 is a substrate binding site. The segment at 162–167 is interaction with RNA; that stretch reads RHNKRR. Substrate-binding positions include aspartate 192 and 227–230; that span reads TKFE.

This sequence belongs to the class I-like SAM-binding methyltransferase superfamily. TrmB family.

The enzyme catalyses guanosine(46) in tRNA + S-adenosyl-L-methionine = N(7)-methylguanosine(46) in tRNA + S-adenosyl-L-homocysteine. The protein operates within tRNA modification; N(7)-methylguanine-tRNA biosynthesis. Functionally, catalyzes the formation of N(7)-methylguanine at position 46 (m7G46) in tRNA. The sequence is that of tRNA (guanine-N(7)-)-methyltransferase from Paracidovorax citrulli (strain AAC00-1) (Acidovorax citrulli).